A 146-amino-acid polypeptide reads, in one-letter code: 3-hydroxyacyl-[acyl-carrier-protein] dehydratase FabZ (146 aa).

The active site involves histidine 49.

Belongs to the thioester dehydratase family. FabZ subfamily.

It is found in the cytoplasm. The enzyme catalyses a (3R)-hydroxyacyl-[ACP] = a (2E)-enoyl-[ACP] + H2O. Involved in unsaturated fatty acids biosynthesis. Catalyzes the dehydration of short chain beta-hydroxyacyl-ACPs and long chain saturated and unsaturated beta-hydroxyacyl-ACPs. This chain is 3-hydroxyacyl-[acyl-carrier-protein] dehydratase FabZ, found in Pseudomonas savastanoi pv. phaseolicola (strain 1448A / Race 6) (Pseudomonas syringae pv. phaseolicola (strain 1448A / Race 6)).